Reading from the N-terminus, the 527-residue chain is PTS system maltose-specific EIICB component (527 aa).

Positions 1–418 (MMQKIQRFGS…FNIATPGREK (418 aa)) constitute a PTS EIIC type-1 domain. A run of 12 helical transmembrane segments spans residues 8–28 (FGSA…IVGI), 59–79 (GWTV…VALA), 93–113 (VYLT…GAFG), 132–152 (IKTL…VVFL), 173–193 (YIVM…SYIW), 200–220 (IGSL…IYTF), 224–244 (ILIP…GPAV), 276–296 (FALH…AFYV), 305–325 (LVAG…ITEP), 326–346 (IEFT…VLAA), 357–377 (VVGN…IPLF), and 382–402 (MTYV…FFVF). Positions 449–527 (DDTAFLYIEA…RERVEKILNQ (79 aa)) constitute a PTS EIIB type-1 domain. Cysteine 471 acts as the Phosphocysteine intermediate; for EIIB activity in catalysis.

The protein resides in the cell membrane. The enzyme catalyses D-maltose(out) + N(pros)-phospho-L-histidyl-[protein] = alpha-maltose 6'-phosphate(in) + L-histidyl-[protein]. The phosphoenolpyruvate-dependent sugar phosphotransferase system (sugar PTS), a major carbohydrate active transport system, catalyzes the phosphorylation of incoming sugar substrates concomitantly with their translocation across the cell membrane. This system is involved in maltose transport. This chain is PTS system maltose-specific EIICB component, found in Bacillus subtilis (strain 168).